A 194-amino-acid polypeptide reads, in one-letter code: dTTP/UTP pyrophosphatase (194 aa).

The active-site Proton acceptor is the aspartate 66.

This sequence belongs to the Maf family. YhdE subfamily. The cofactor is a divalent metal cation.

It localises to the cytoplasm. It catalyses the reaction dTTP + H2O = dTMP + diphosphate + H(+). The enzyme catalyses UTP + H2O = UMP + diphosphate + H(+). Its function is as follows. Nucleoside triphosphate pyrophosphatase that hydrolyzes dTTP and UTP. May have a dual role in cell division arrest and in preventing the incorporation of modified nucleotides into cellular nucleic acids. This Anaeromyxobacter dehalogenans (strain 2CP-1 / ATCC BAA-258) protein is dTTP/UTP pyrophosphatase.